A 122-amino-acid chain; its full sequence is Protein YqjC (122 aa).

The N-terminal stretch at Met-1–Ala-20 is a signal peptide. The segment at Gln-65–Ile-100 is disordered. Residues Leu-66–Ile-100 are compositionally biased toward basic and acidic residues.

This Escherichia coli (strain K12) protein is Protein YqjC (yqjC).